Consider the following 400-residue polypeptide: MKAICVNFGPQHPAAHGVLRLILQLNGEVVEKMDIHIGLLHRGSEKLMETKPYLQSMPYFDRLDYVSMMVQEHAYCLAIEALLNTTNYTANFVLVRTMFDELTRILNHMLAIACHALDIGSMSSIFWAFEEREKIMEFYERVCGRRMHAAFYRPNEVNLNFLSVKLLTDILEFNNNCLTTLSEMHNILTYNKIWKQRLVNIGSISYKDCLDFGLTGVMARSTGIKRDLRMDAFDTYANYYYLNFRSYTGQAGDSYDRFLIRMNEMSESINIISQAIFKLTTSKNTCSPASILKALNKKKFISQTYKNEYSSMEKLITHFKYWSEGFKIQSNWTYQAVESPKGEFGVTLVSDGSNKPYRCKVRSPAYHHLQVLPKMSKGHLLADLSALIGTIDIVFGEIDR.

Belongs to the complex I 49 kDa subunit family.

Its subcellular location is the mitochondrion. The catalysed reaction is a ubiquinone + NADH + 5 H(+)(in) = a ubiquinol + NAD(+) + 4 H(+)(out). Functionally, core subunit of the mitochondrial membrane respiratory chain NADH dehydrogenase (Complex I) that is believed to belong to the minimal assembly required for catalysis. Complex I functions in the transfer of electrons from NADH to the respiratory chain. The immediate electron acceptor for the enzyme is believed to be ubiquinone. Component of the iron-sulfur (IP) fragment of the enzyme. Component of the iron-sulfur (IP) fragment of the enzyme. This Paramecium tetraurelia protein is NADH-ubiquinone oxidoreductase 49 kDa subunit (NAD7).